The following is a 767-amino-acid chain: MTISPPESGEKNKKVLEDPVKADPRPIDFAKLDKPGFWSTKLSKGPKTTTWIWNLHADAHDFDVHTGDAEEATRKIFSAHFGHLAVIFIWMSAAFFHGARFSNYSGWLADPTHVKPGAQQVWAIVGQEMLNADLGANYNGIQISSGIFHMWRAWGITNESELMALAIGAVVMAALMLHAGIFHYHKAAPKMEWFQDIESMLNHHIAGLVGLGSLAWAGHCIHIGAPTAALLDAIDAGSPLVINGKEIATIADMPMPHQLCDPQIIGQIFPGLASGTGNFFSLNWLAFSDFLTFKGGLNPVTGSLWMTDVSHHHLAFGVIAIIGGHMYRTNYGIGHSMKEILDSQQGDPILFPAPKGHQGLFEFMAESRHAQLAVNLAMLGSISILVSHHMYAMPPYPYIATDYMTVLGLFTHHMWIGGLFIVGAGAHAGIAMVRDYDPAKHIDNVLDRILKARDALISHLNWVCMWLGFHSFGLYIHNDTMRALGRPQDMFSDSAIQLQPIFAQWVQSIQASAVGTSLLAGTAEALPHKALSEVFNGSLVEVGGKVAIAPIPLGTADLMIHHIHAFQIHVTVLILLKGVLYARSSRLIPDKASLGFRFPCDGPGRGGTCQVSSWDHVFLALFWMYNCLSIVIFHFSWKMQSDVWGLTGGNFAQSSITINGWLRDFLWAQASQVLTSYGQSISMYGLMFLGAHFIWAFSLMFLFSGRGYWQELFESIVWAHNKLKVAPTIQPRALSITQGRAVGVTHFLVGGIATTWAFFHARLFGLG.

Positions 1-22 (MTISPPESGEKNKKVLEDPVKA) are disordered. Over residues 8–22 (SGEKNKKVLEDPVKA) the composition is skewed to basic and acidic residues. 8 consecutive transmembrane segments (helical) span residues 76-99 (IFSA…FHGA), 162-185 (LMAL…FHYH), 201-225 (LNHH…HIGA), 309-327 (VSHH…GHMY), 368-391 (RHAQ…HHMY), 407-433 (LGLF…IAMV), 455-477 (ALIS…LYIH), and 558-576 (LMIH…LILL). Residues Cys600 and Cys609 each contribute to the [4Fe-4S] cluster site. The next 2 membrane-spanning stretches (helical) occupy residues 616–637 (HVFL…HFSW) and 681–703 (ISMY…MFLF). His692 contributes to the divinylchlorophyll a' binding site. Positions 700 and 708 each coordinate divinyl chlorophyll a. A phylloquinone-binding site is contributed by Trp709. A helical transmembrane segment spans residues 741–761 (AVGVTHFLVGGIATTWAFFHA).

Belongs to the PsaA/PsaB family. In terms of assembly, the PsaA/B heterodimer binds the P700 divinyl chlorophyll special pair and subsequent electron acceptors. PSI consists of a core antenna complex that captures photons, and an electron transfer chain that converts photonic excitation into a charge separation. The cyanobacterial PSI reaction center is composed of one copy each of PsaA,B,C,D,E,F,I,J,K,L,M and X, and forms trimeric complexes. It depends on PSI electron transfer chain: 5 divinyl chlorophyll a, 1 divinyl chlorophyll a', 2 phylloquinones and 3 4Fe-4S clusters. PSI core antenna: 90 divinyl chlorophyll a, 22 carotenoids, 3 phospholipids and 1 galactolipid. P700 is a divinyl chlorophyll a/divinyl chlorophyll a' dimer, A0 is one or more divinyl chlorophyll a, A1 is one or both phylloquinones and FX is a shared 4Fe-4S iron-sulfur center. as a cofactor.

The protein resides in the cellular thylakoid membrane. It carries out the reaction reduced [plastocyanin] + hnu + oxidized [2Fe-2S]-[ferredoxin] = oxidized [plastocyanin] + reduced [2Fe-2S]-[ferredoxin]. Its function is as follows. PsaA and PsaB bind P700, the primary electron donor of photosystem I (PSI), as well as the electron acceptors A0, A1 and FX. PSI is a plastocyanin/cytochrome c6-ferredoxin oxidoreductase, converting photonic excitation into a charge separation, which transfers an electron from the donor P700 chlorophyll pair to the spectroscopically characterized acceptors A0, A1, FX, FA and FB in turn. Oxidized P700 is reduced on the lumenal side of the thylakoid membrane by plastocyanin or cytochrome c6. In Prochlorococcus marinus (strain MIT 9301), this protein is Photosystem I P700 chlorophyll a apoprotein A1.